The chain runs to 513 residues: Maturase K (513 aa).

The protein belongs to the intron maturase 2 family. MatK subfamily.

Its subcellular location is the plastid. It localises to the chloroplast. Usually encoded in the trnK tRNA gene intron. Probably assists in splicing its own and other chloroplast group II introns. The protein is Maturase K of Typha latifolia (Bulrush).